We begin with the raw amino-acid sequence, 100 residues long: NAD(P)H-quinone oxidoreductase subunit 4L, chloroplastic (100 aa).

3 helical membrane passes run 1–21, 31–51, and 63–83; these read MLEH…YGLV, MCLE…SNFF, and IFVI…VLAI.

The protein belongs to the complex I subunit 4L family. As to quaternary structure, NDH is composed of at least 16 different subunits, 5 of which are encoded in the nucleus.

The protein localises to the plastid. Its subcellular location is the chloroplast thylakoid membrane. The catalysed reaction is a plastoquinone + NADH + (n+1) H(+)(in) = a plastoquinol + NAD(+) + n H(+)(out). It catalyses the reaction a plastoquinone + NADPH + (n+1) H(+)(in) = a plastoquinol + NADP(+) + n H(+)(out). NDH shuttles electrons from NAD(P)H:plastoquinone, via FMN and iron-sulfur (Fe-S) centers, to quinones in the photosynthetic chain and possibly in a chloroplast respiratory chain. The immediate electron acceptor for the enzyme in this species is believed to be plastoquinone. Couples the redox reaction to proton translocation, and thus conserves the redox energy in a proton gradient. This chain is NAD(P)H-quinone oxidoreductase subunit 4L, chloroplastic, found in Cryptomeria japonica (Japanese cedar).